Reading from the N-terminus, the 901-residue chain is HTH-type transcriptional regulator MalT (901 aa).

39–46 (SPAGYGKT) is an ATP binding site. The HTH luxR-type domain occupies 829 to 894 (ELIRTSPLTQ…DAVQHAQQLL (66 aa)). Positions 853–872 (NEQIAGELDVAATTIKTHIR) form a DNA-binding region, H-T-H motif.

Belongs to the MalT family. In terms of assembly, monomer in solution. Oligomerizes to an active state in the presence of the positive effectors ATP and maltotriose.

With respect to regulation, activated by ATP and maltotriose, which are both required for DNA binding. Functionally, positively regulates the transcription of the maltose regulon whose gene products are responsible for uptake and catabolism of malto-oligosaccharides. Specifically binds to the promoter region of its target genes, recognizing a short DNA motif called the MalT box. The protein is HTH-type transcriptional regulator MalT of Klebsiella pneumoniae subsp. pneumoniae (strain ATCC 700721 / MGH 78578).